Reading from the N-terminus, the 160-residue chain is Serine-protein kinase RsbW (160 aa).

It belongs to the anti-sigma-factor family.

It catalyses the reaction L-seryl-[protein] + ATP = O-phospho-L-seryl-[protein] + ADP + H(+). The enzyme catalyses L-threonyl-[protein] + ATP = O-phospho-L-threonyl-[protein] + ADP + H(+). Negative regulator of sigma-B activity. Phosphorylates and inactivates its specific antagonist protein, RsbV. Upon phosphorylation of RsbV, RsbW is released and binds to sigma-B, thereby blocking its ability to form an RNA polymerase holoenzyme (E-sigma-B). This is Serine-protein kinase RsbW from Bacillus anthracis (strain A0248).